We begin with the raw amino-acid sequence, 436 residues long: T-box transcription factor TBX6 (436 aa).

Positions 67-87 are disordered; sequence PLLPSALGPETAPPPPEALHS. The segment at residues 100–273 is a DNA-binding region (T-box); the sequence is LWKEFSAVGT…ANPFAKGFRE (174 aa). A compositionally biased stretch (basic and acidic residues) spans 275–284; it reads GRNCKRERDA. Disordered stretches follow at residues 275–344 and 360–383; these read GRNC…CGGP and PSHL…APYS. The span at 332–344 shows a compositional bias: low complexity; it reads EAASASAPPCGGP.

It localises to the nucleus. Its function is as follows. T-box transcription factor that plays an essential role in the determination of the fate of axial stem cells: neural vs mesodermal. Acts in part by down-regulating, a specific enhancer (N1) of SOX2, to inhibit neural development. Seems to also play an essential role in left/right axis determination and acts through effects on Notch signaling around the node as well as through an effect on the morphology and motility of the nodal cilia. This is T-box transcription factor TBX6 (Tbx6) from Rattus norvegicus (Rat).